A 147-amino-acid chain; its full sequence is Protein MioC (147 aa).

In terms of domain architecture, Flavodoxin-like spans 4 to 143; the sequence is ITLISGSTLG…PAEEWLGSWV (140 aa).

Belongs to the flavodoxin family. MioC subfamily. Homodimer. The cofactor is FMN.

In terms of biological role, probable electron transporter required for biotin synthase activity. The sequence is that of Protein MioC (mioC) from Escherichia coli (strain K12).